The chain runs to 614 residues: DNA mismatch repair protein MutL (614 aa).

It belongs to the DNA mismatch repair MutL/HexB family.

In terms of biological role, this protein is involved in the repair of mismatches in DNA. It is required for dam-dependent methyl-directed DNA mismatch repair. May act as a 'molecular matchmaker', a protein that promotes the formation of a stable complex between two or more DNA-binding proteins in an ATP-dependent manner without itself being part of a final effector complex. The chain is DNA mismatch repair protein MutL from Thermoanaerobacter pseudethanolicus (strain ATCC 33223 / 39E) (Clostridium thermohydrosulfuricum).